The following is a 167-amino-acid chain: Phospholipase A2 (167 aa).

3 residues coordinate Ca(2+): tryptophan 38, glycine 40, and glycine 42. 5 cysteine pairs are disulfide-bonded: cysteine 39–cysteine 61, cysteine 60–cysteine 99, cysteine 67–cysteine 92, cysteine 90–cysteine 127, and cysteine 132–cysteine 144. A glycan (N-linked (GlcNAc...) asparagine) is linked at asparagine 47. Histidine 64 is a catalytic residue. Ca(2+) is bound at residue aspartate 65. Positions alanine 136 to arginine 140 are excised as a propeptide.

The protein belongs to the phospholipase A2 family. Group III subfamily. In terms of assembly, heterodimer composed of a large subunit and a small subunit; disulfide-linked. The cofactor is Ca(2+). Expressed by the venom gland.

It localises to the secreted. The enzyme catalyses a 1,2-diacyl-sn-glycero-3-phosphocholine + H2O = a 1-acyl-sn-glycero-3-phosphocholine + a fatty acid + H(+). Its function is as follows. Phospholipase toxin, which catalyzes the calcium-dependent hydrolysis of the 2-acyl groups in 3-sn-phosphoglycerides. Inhibits both skeletal (RYR1) and cardiac (RYR2) ryanodine receptors (calcium release channels). Probably blocks ryanodine receptors by generating a lipid product. Shows hemolytic activity, but it is not know if it is direct or indirect. The polypeptide is Phospholipase A2 (Hottentotta tamulus (Eastern Indian scorpion)).